Here is a 245-residue protein sequence, read N- to C-terminus: tRNA pseudouridine synthase A (245 aa).

The active-site Nucleophile is the D52. Y111 provides a ligand contact to substrate.

This sequence belongs to the tRNA pseudouridine synthase TruA family. In terms of assembly, homodimer.

The catalysed reaction is uridine(38/39/40) in tRNA = pseudouridine(38/39/40) in tRNA. Its function is as follows. Formation of pseudouridine at positions 38, 39 and 40 in the anticodon stem and loop of transfer RNAs. The sequence is that of tRNA pseudouridine synthase A from Rhodopseudomonas palustris (strain BisB5).